Reading from the N-terminus, the 403-residue chain is Protein LAZ1 homolog 2 (403 aa).

A run of 6 helical transmembrane segments spans residues 16–36, 50–70, 162–182, 191–211, 236–256, and 269–289; these read SLIIGGSFATVAICLSLYSIL, WIVSVLFMVPVYATESIISLS, MILKTFCAFLTFLLELLGVYG, GYPYIVVVLNFSQMWALFCLV, IVFATWWQGFGIALLCYYGIL, and FLICIEMAIAAVAHLFVFPAE. The disordered stretch occupies residues 381-403; that stretch reads SDGKEETEVTEEVTVETSVPPKE.

This sequence belongs to the TMEM184 family.

Its subcellular location is the membrane. The protein is Protein LAZ1 homolog 2 of Arabidopsis thaliana (Mouse-ear cress).